A 651-amino-acid polypeptide reads, in one-letter code: Probable replication restart protein PriA (651 aa).

Residues Cys-371, Cys-374, Cys-380, Cys-383, Cys-399, Cys-402, Cys-411, and Cys-414 each contribute to the Zn(2+) site.

Belongs to the helicase family. PriA subfamily. As to quaternary structure, component of the replication restart primosome. The cofactor is Zn(2+).

Initiates the restart of stalled replication forks, which reloads the replicative helicase on sites other than the origin of replication. Recognizes and binds to abandoned replication forks and remodels them to uncover a helicase loading site. Promotes assembly of the primosome at these replication forks. The sequence is that of Probable replication restart protein PriA from Mycobacterium leprae (strain TN).